Consider the following 307-residue polypeptide: Transcription initiation factor IIB 5 (307 aa).

The TFIIB-type zinc-finger motif lies at 19–47; that stretch reads TTEPCPECGGPVRTNSAETVCADCGLIID. Zn(2+) is bound by residues Cys23, Cys26, Cys39, and Cys42. Basic and acidic residues-rich tracts occupy residues 54–66 and 107–121; these read GPEWHRDDADTAK and MRREQSRGRWRSTKE. A disordered region spans residues 54–121; sequence GPEWHRDDAD…SRGRWRSTKE (68 aa). 2 consecutive repeat copies span residues 129 to 212 and 223 to 304.

This sequence belongs to the TFIIB family.

In terms of biological role, stabilizes TBP binding to an archaeal box-A promoter. Also responsible for recruiting RNA polymerase II to the pre-initiation complex (DNA-TBP-TFIIB). This chain is Transcription initiation factor IIB 5, found in Halobacterium salinarum (strain ATCC 700922 / JCM 11081 / NRC-1) (Halobacterium halobium).